The sequence spans 466 residues: Anthocyanidin 3-O-glucosyltransferase 1 (466 aa).

Residue histidine 22 is the Proton acceptor of the active site. 2 residues coordinate an anthocyanidin: histidine 22 and glutamine 87. Catalysis depends on aspartate 122, which acts as the Charge relay. UDP-alpha-D-glucose is bound at residue threonine 145. Residue histidine 154 participates in an anthocyanidin binding. UDP-alpha-D-glucose is bound by residues alanine 346, glutamine 348, histidine 363, tryptophan 366, asparagine 367, serine 368, and glutamate 371. Glycine 386 serves as a coordination point for an anthocyanidin. UDP-alpha-D-glucose-binding residues include aspartate 387 and glutamine 388.

This sequence belongs to the UDP-glycosyltransferase family. As to expression, highest expression detected in receptacles and achenes, with very low levels detected in runners, leaves, flowers, crowns and green receptacles.

It catalyses the reaction an anthocyanidin + UDP-alpha-D-glucose + H(+) = an anthocyanidin 3-O-beta-D-glucoside + UDP. It carries out the reaction cyanidin + UDP-alpha-D-glucose = cyanidin 3-O-beta-D-glucoside + UDP + H(+). The enzyme catalyses pelargonidin + UDP-alpha-D-glucose = pelargonidin 3-O-beta-D-glucoside + UDP. The catalysed reaction is peonidin + UDP-alpha-D-glucose = peonidin 3-O-beta-D-glucoside + UDP. It catalyses the reaction delphinidin + UDP-alpha-D-glucose = delphinidin 3-O-beta-D-glucoside + UDP. It carries out the reaction a flavonol + UDP-alpha-D-glucose = a flavonol 3-O-beta-D-glucoside + UDP + H(+). It participates in pigment biosynthesis; anthocyanin biosynthesis. In terms of biological role, in the presence of other necessary color factors, this glycosylation reaction allows the accumulation of anthocyanin pigments. Uses UDP-Glc as a sugar donor, but not UDP-Gal or UDP-GlcUA. Anthocyanidins are the preferred substrates in vivo, but flavonols can also be glucosylated in vitro. The sequence is that of Anthocyanidin 3-O-glucosyltransferase 1 from Fragaria ananassa (Strawberry).